Reading from the N-terminus, the 202-residue chain is Lymphotoxin-alpha (202 aa).

Positions 1 to 33 (MTPLGRLHLLRVLSTPPVFLLGLLLALPLGAQG) are cleaved as a signal peptide. In terms of domain architecture, THD spans 60–202 (PAAHLVGYPS…STVFFGAFAL (143 aa)). N-linked (GlcNAc...) asparagine glycosylation occurs at asparagine 93.

Belongs to the tumor necrosis factor family. In terms of assembly, homotrimer, and heterotrimer of either two LTB and one LTA subunits or (less prevalent) two LTA and one LTB subunits. Interacts with TNFRSF14.

It localises to the secreted. Its subcellular location is the membrane. Cytokine that in its homotrimeric form binds to TNFRSF1A/TNFR1, TNFRSF1B/TNFBR and TNFRSF14/HVEM. In its heterotrimeric form with LTB binds to TNFRSF3/LTBR. Lymphotoxin is produced by lymphocytes and is cytotoxic for a wide range of tumor cells in vitro and in vivo. This chain is Lymphotoxin-alpha (Lta), found in Rattus norvegicus (Rat).